Here is a 317-residue protein sequence, read N- to C-terminus: Serpentine receptor class delta-26 (317 aa).

The next 7 helical transmembrane spans lie at 5–25, 38–58, 83–103, 122–142, 176–196, 227–247, and 258–278; these read LLHT…MYLA, AIIT…FFVM, ACYV…IWMI, SLVF…AAWI, ITLI…YAWI, FQVF…AMFG, and LVSI…ILFV.

The protein belongs to the nematode receptor-like protein srd family.

It is found in the membrane. This chain is Serpentine receptor class delta-26 (srd-26), found in Caenorhabditis elegans.